We begin with the raw amino-acid sequence, 252 residues long: Imidazole glycerol phosphate synthase subunit HisF (252 aa).

Residues Asp-11 and Asp-130 contribute to the active site.

The protein belongs to the HisA/HisF family. As to quaternary structure, heterodimer of HisH and HisF.

It localises to the cytoplasm. It catalyses the reaction 5-[(5-phospho-1-deoxy-D-ribulos-1-ylimino)methylamino]-1-(5-phospho-beta-D-ribosyl)imidazole-4-carboxamide + L-glutamine = D-erythro-1-(imidazol-4-yl)glycerol 3-phosphate + 5-amino-1-(5-phospho-beta-D-ribosyl)imidazole-4-carboxamide + L-glutamate + H(+). It participates in amino-acid biosynthesis; L-histidine biosynthesis; L-histidine from 5-phospho-alpha-D-ribose 1-diphosphate: step 5/9. Functionally, IGPS catalyzes the conversion of PRFAR and glutamine to IGP, AICAR and glutamate. The HisF subunit catalyzes the cyclization activity that produces IGP and AICAR from PRFAR using the ammonia provided by the HisH subunit. The chain is Imidazole glycerol phosphate synthase subunit HisF from Geobacillus sp. (strain WCH70).